A 116-amino-acid polypeptide reads, in one-letter code: MDFGLIFFIVALLKGVQCEVKLLESGGGLVQPGGSLKLSCAASGFDFSRYWMSWVRQAPGKGLEWIGEINPDSSTINYTPSLKDKFIISRDNAKNTLYLQMSKVRSEDTALYYCAR.

The signal sequence occupies residues 1-18 (MDFGLIFFIVALLKGVQC). Positions 19–116 (EVKLLESGGG…EDTALYYCAR (98 aa)) constitute an Ig-like domain.

The sequence is that of Ig heavy chain V region 441 from Mus musculus (Mouse).